A 2543-amino-acid polypeptide reads, in one-letter code: Highly reducing polyketide synthase PKS2 (2543 aa).

Positions 4-425 (EPRIAVIGLS…GSNSAILLEG (422 aa)) constitute a Ketosynthase family 3 (KS3) domain. Active-site for beta-ketoacyl synthase activity residues include C174, H309, and H349. The tract at residues 573–902 (VFTGQGAQHA…TYLPTLFRGT (330 aa)) is malonyl-CoA:ACP transacylase (MAT) domain. The active-site For malonyltransferase activity is the S662. The N-terminal hotdog fold stretch occupies residues 969–1101 (HPLLGRKISP…GQIEAEMTDM (133 aa)). Residues 969–1281 (HPLLGRKISP…FRNIGSAEEV (313 aa)) enclose the PKS/mFAS DH domain. Positions 969-1283 (HPLLGRKISP…NIGSAEEVID (315 aa)) are dehydratase (DH) domain. The Proton acceptor; for dehydratase activity role is filled by H1001. Residues 1119–1281 (TGLKEHDINA…FRNIGSAEEV (163 aa)) form a C-terminal hotdog fold region. D1188 acts as the Proton donor; for dehydratase activity in catalysis. Residues 1438 to 1631 (SKVLGYLTEY…LPSRYGTDKP (194 aa)) are methyltransferase (CMet) domain. Residues 1847–2159 (GSPDTIYFQR…SGEHMGKMVI (313 aa)) form an enoylreductase (ER) domain region. Residues 2184–2359 (ATYLVAGGTR…YTVSIALPVV (176 aa)) form a ketoreductase (KR) domain region. Residues 2463-2540 (DPLIGLTEAM…ALATEILSQR (78 aa)) enclose the Carrier domain. At S2500 the chain carries O-(pantetheine 4'-phosphoryl)serine.

The protein operates within secondary metabolite biosynthesis. In terms of biological role, highly reducing polyketide synthase; part of the gene cluster that mediates the biosynthesis of phomenoic acid, a long chain aliphatic carboxylic acid that does not appear to be essential for pathogenicity but may play a role in allowing to outcompete other fungi in the environmental niche via its antifungal properties. The polyketide synthase produces the long methylated aliphatic carboxylic acid chain of phomenoic acid. The cluster-specific cytochrome P450 monooxygenase may then hydroxylate the methyl group of carbon 31. The putative dehydrogenase YogA, which has no obvious role in phomenoic acid biosynthesis, may further modify phomenoic acid to produce a compound not identified yet. This is Highly reducing polyketide synthase PKS2 from Leptosphaeria maculans (strain JN3 / isolate v23.1.3 / race Av1-4-5-6-7-8) (Blackleg fungus).